The sequence spans 197 residues: GCN5-related N-acetyltransferase 1, chloroplastic (197 aa).

The transit peptide at 1–37 directs the protein to the chloroplast; that stretch reads MFLGGTISTPPASLRLRSTLNPQNAVTQSSSQATFPA. Residues 23-34 show a composition bias toward polar residues; the sequence is QNAVTQSSSQAT. Positions 23–46 are disordered; sequence QNAVTQSSSQATFPAAMQRKPPSY. In terms of domain architecture, N-acetyltransferase spans 58–195; the sequence is FLLRRTTEGL…GMVFIRKQRN (138 aa). Residues 129–131, 137–142, 165–167, and tyrosine 172 contribute to the acetyl-CoA site; these read VVV, SCGLGK, and EPR. Tyrosine 172 (proton donor) is an active-site residue.

Belongs to the acetyltransferase family. GNAT subfamily. As to quaternary structure, oligomer. Autoacetylated. In terms of tissue distribution, expressed in green tissues. Accumulates mainly in flowers and young leaves, and, to a lower extent, in stems and mature leaves, but barely in roots.

The protein localises to the plastid. Its subcellular location is the chloroplast. It catalyses the reaction an N-terminal L-alpha-aminoacyl-[protein] + acetyl-CoA = N-terminal N(alpha)-acetyl-L-alpha-aminoacyl-[protein] + CoA + H(+). The catalysed reaction is L-lysyl-[protein] + acetyl-CoA = N(6)-acetyl-L-lysyl-[protein] + CoA + H(+). It carries out the reaction 5-methoxytryptamine + acetyl-CoA = melatonin + CoA + H(+). The enzyme catalyses serotonin + acetyl-CoA = N-acetylserotonin + CoA + H(+). Inhibited by 5-methoxytryptamine in vitro. Functionally, protein acetyltransferase with dual specificity triggering both N-alpha-acetylation (NTA) and epsilon-lysine acetylation (KA), possibly with a low efficiency or toward specific plastid substrates. Involved in melatonin biosynthesis by catalyzing the formation of N-acetylserotonin (NAS) from serotonin and of melatonin (N-acetyl-5-methoxytryptamine) from 5-methoxytryptamine (5-MT). The protein is GCN5-related N-acetyltransferase 1, chloroplastic of Arabidopsis thaliana (Mouse-ear cress).